Reading from the N-terminus, the 448-residue chain is Probable D-serine dehydratase (448 aa).

Lys119 is subject to N6-(pyridoxal phosphate)lysine.

This sequence belongs to the serine/threonine dehydratase family. DsdA subfamily. It depends on pyridoxal 5'-phosphate as a cofactor.

The enzyme catalyses D-serine = pyruvate + NH4(+). This Pseudomonas aeruginosa (strain UCBPP-PA14) protein is Probable D-serine dehydratase.